Reading from the N-terminus, the 418-residue chain is S-adenosylmethionine synthase (418 aa).

His16 lines the ATP pocket. Asp18 serves as a coordination point for Mg(2+). Residue Glu44 coordinates K(+). Residues Glu57 and Gln100 each coordinate L-methionine. Residues 100-110 (QSPDIAQGVDS) are flexible loop. ATP-binding positions include 174–176 (DGK), Asp259, 265–266 (RK), Ala282, and Lys286. An L-methionine-binding site is contributed by Asp259. Lys290 contacts L-methionine.

This sequence belongs to the AdoMet synthase family. In terms of assembly, homotetramer; dimer of dimers. Mg(2+) is required as a cofactor. K(+) serves as cofactor.

The protein localises to the cytoplasm. The enzyme catalyses L-methionine + ATP + H2O = S-adenosyl-L-methionine + phosphate + diphosphate. Its pathway is amino-acid biosynthesis; S-adenosyl-L-methionine biosynthesis; S-adenosyl-L-methionine from L-methionine: step 1/1. Functionally, catalyzes the formation of S-adenosylmethionine (AdoMet) from methionine and ATP. The overall synthetic reaction is composed of two sequential steps, AdoMet formation and the subsequent tripolyphosphate hydrolysis which occurs prior to release of AdoMet from the enzyme. This Acaryochloris marina (strain MBIC 11017) protein is S-adenosylmethionine synthase.